The following is a 122-amino-acid chain: Basic phospholipase A2 F16 (122 aa).

7 disulfide bridges follow: C26–C115, C28–C44, C43–C95, C49–C122, C50–C88, C57–C81, and C75–C86. 3 residues coordinate Ca(2+): Y27, G29, and G31. The active site involves H47. D48 contacts Ca(2+). Residue D89 is part of the active site.

The protein belongs to the phospholipase A2 family. Group II subfamily. D49 sub-subfamily. The cofactor is Ca(2+). Expressed by the venom gland.

The protein localises to the secreted. It carries out the reaction a 1,2-diacyl-sn-glycero-3-phosphocholine + H2O = a 1-acyl-sn-glycero-3-phosphocholine + a fatty acid + H(+). Pre-incubation with heparin markedly reduces the neurotoxicity of this toxin. Snake venom phospholipase A2 (PLA2) that produces neuromuscular blockade in chick biventer cervicis preparations in the absence and presence of crotapotin. In contrast, in mouse phrenic nerve-diaphragm preparations, the neuromuscular blockade is dependent on crotapotin. PLA2 catalyzes the calcium-dependent hydrolysis of the 2-acyl groups in 3-sn-phosphoglycerides. The chain is Basic phospholipase A2 F16 from Crotalus durissus terrificus (South American rattlesnake).